The chain runs to 282 residues: Pantothenate synthetase (282 aa).

Methionine 31–histidine 38 is an ATP binding site. Catalysis depends on histidine 38, which acts as the Proton donor. Glutamine 62 lines the (R)-pantoate pocket. Glutamine 62 serves as a coordination point for beta-alanine. An ATP-binding site is contributed by glycine 148–aspartate 151. Glutamine 154 lines the (R)-pantoate pocket. ATP-binding positions include valine 177 and tyrosine 185 to arginine 188.

It belongs to the pantothenate synthetase family. As to quaternary structure, homodimer.

The protein localises to the cytoplasm. The enzyme catalyses (R)-pantoate + beta-alanine + ATP = (R)-pantothenate + AMP + diphosphate + H(+). It functions in the pathway cofactor biosynthesis; (R)-pantothenate biosynthesis; (R)-pantothenate from (R)-pantoate and beta-alanine: step 1/1. Catalyzes the condensation of pantoate with beta-alanine in an ATP-dependent reaction via a pantoyl-adenylate intermediate. The polypeptide is Pantothenate synthetase (Aquifex aeolicus (strain VF5)).